Consider the following 318-residue polypeptide: Bifunctional protein FolD 3 (318 aa).

NADP(+) contacts are provided by residues 173–175 (GRS) and Ile242.

This sequence belongs to the tetrahydrofolate dehydrogenase/cyclohydrolase family. In terms of assembly, homodimer.

It catalyses the reaction (6R)-5,10-methylene-5,6,7,8-tetrahydrofolate + NADP(+) = (6R)-5,10-methenyltetrahydrofolate + NADPH. It carries out the reaction (6R)-5,10-methenyltetrahydrofolate + H2O = (6R)-10-formyltetrahydrofolate + H(+). It functions in the pathway one-carbon metabolism; tetrahydrofolate interconversion. Its function is as follows. Catalyzes the oxidation of 5,10-methylenetetrahydrofolate to 5,10-methenyltetrahydrofolate and then the hydrolysis of 5,10-methenyltetrahydrofolate to 10-formyltetrahydrofolate. In Rubrobacter xylanophilus (strain DSM 9941 / JCM 11954 / NBRC 16129 / PRD-1), this protein is Bifunctional protein FolD 3.